A 474-amino-acid polypeptide reads, in one-letter code: tRNA-2-methylthio-N(6)-dimethylallyladenosine synthase (474 aa).

The 118-residue stretch at 3-120 (KKLLIKTWGC…LPEMIRQSQS (118 aa)) folds into the MTTase N-terminal domain. [4Fe-4S] cluster contacts are provided by Cys12, Cys49, Cys83, Cys157, Cys161, and Cys164. Residues 143–375 (KAEGATAFVS…QQQVNSQAMR (233 aa)) enclose the Radical SAM core domain. The TRAM domain maps to 378-441 (RLMLDTEQRV…ANSLRGELVR (64 aa)).

The protein belongs to the methylthiotransferase family. MiaB subfamily. Monomer. It depends on [4Fe-4S] cluster as a cofactor.

It is found in the cytoplasm. The catalysed reaction is N(6)-dimethylallyladenosine(37) in tRNA + (sulfur carrier)-SH + AH2 + 2 S-adenosyl-L-methionine = 2-methylsulfanyl-N(6)-dimethylallyladenosine(37) in tRNA + (sulfur carrier)-H + 5'-deoxyadenosine + L-methionine + A + S-adenosyl-L-homocysteine + 2 H(+). In terms of biological role, catalyzes the methylthiolation of N6-(dimethylallyl)adenosine (i(6)A), leading to the formation of 2-methylthio-N6-(dimethylallyl)adenosine (ms(2)i(6)A) at position 37 in tRNAs that read codons beginning with uridine. The polypeptide is tRNA-2-methylthio-N(6)-dimethylallyladenosine synthase (Aliivibrio fischeri (strain ATCC 700601 / ES114) (Vibrio fischeri)).